The sequence spans 650 residues: tRNA-dihydrouridine(47) synthase [NAD(P)(+)]-like (650 aa).

2 disordered regions span residues 1 to 24 (MAEG…GALE) and 46 to 120 (EAKG…NYDK). Ala-2 is subject to N-acetylalanine. Composition is skewed to basic and acidic residues over residues 48–58 (KGQEKTCRETE) and 70–79 (PEAKRIRLED). A compositionally biased stretch (basic residues) spans 101–113 (KRARGQNKGRPHV). 2 consecutive C3H1-type zinc fingers follow at residues 118-148 (YDKN…HDVG) and 156-186 (ADLG…HLRP). Residues 235 to 284 (FSQGPTPAAAVPEGTAAEGAPRQENCGAQQVPAGPGTSTPPSSPVRTCGP) form a disordered region. Ser-236 carries the post-translational modification Phosphoserine. A Phosphothreonine modification is found at Thr-273. Residues Ser-276 and Ser-277 each carry the phosphoserine modification. Residues 311–313 (PLT) and Gln-365 each bind FMN. The active-site Proton donor is the Cys-396. A Glycyl lysine isopeptide (Lys-Gly) (interchain with G-Cter in SUMO2) cross-link involves residue Lys-416. Residues Lys-435, His-465, 497–499 (NGD), and 520–521 (AR) contribute to the FMN site.

The protein belongs to the Dus family. Dus3 subfamily. Requires FMN as cofactor.

It carries out the reaction 5,6-dihydrouridine(47) in tRNA + NAD(+) = uridine(47) in tRNA + NADH + H(+). The catalysed reaction is 5,6-dihydrouridine(47) in tRNA + NADP(+) = uridine(47) in tRNA + NADPH + H(+). It catalyses the reaction a 5,6-dihydrouridine in mRNA + NAD(+) = a uridine in mRNA + NADH + H(+). The enzyme catalyses a 5,6-dihydrouridine in mRNA + NADP(+) = a uridine in mRNA + NADPH + H(+). In terms of biological role, catalyzes the synthesis of dihydrouridine, a modified base, in various RNAs, such as tRNAs, mRNAs and some long non-coding RNAs (lncRNAs). Mainly modifies the uridine in position 47 (U47) in the D-loop of most cytoplasmic tRNAs. Also able to mediate the formation of dihydrouridine in some mRNAs, thereby regulating their translation. This is tRNA-dihydrouridine(47) synthase [NAD(P)(+)]-like from Homo sapiens (Human).